A 195-amino-acid chain; its full sequence is Protein GrpE (195 aa).

Belongs to the GrpE family. Homodimer.

It localises to the cytoplasm. Functionally, participates actively in the response to hyperosmotic and heat shock by preventing the aggregation of stress-denatured proteins, in association with DnaK and GrpE. It is the nucleotide exchange factor for DnaK and may function as a thermosensor. Unfolded proteins bind initially to DnaJ; upon interaction with the DnaJ-bound protein, DnaK hydrolyzes its bound ATP, resulting in the formation of a stable complex. GrpE releases ADP from DnaK; ATP binding to DnaK triggers the release of the substrate protein, thus completing the reaction cycle. Several rounds of ATP-dependent interactions between DnaJ, DnaK and GrpE are required for fully efficient folding. The polypeptide is Protein GrpE (Francisella tularensis subsp. tularensis (strain FSC 198)).